We begin with the raw amino-acid sequence, 1112 residues long: Lysylphosphatidylglycerol biosynthesis bifunctional protein LysX (1112 aa).

The segment at 1-613 (MTLTSPPRTR…VLHHDGTAPD (613 aa)) is phosphatidylglycerol lysyltransferase. 7 helical membrane-spanning segments follow: residues 18–38 (VPAA…IASV), 60–80 (FPDT…ALAA), 84–104 (IAWW…VADL), 118–138 (VIGL…RPLF), 152–172 (GVLA…LELF), 209–229 (VNAL…IVLF), and 308–328 (AWLA…ASVG). A lysine--tRNA ligase region spans residues 614 to 1112 (MSGLRTDTAD…TLPFPLARPR (499 aa)). The segment at residues 675–748 (VAGRVLRIRD…GTRSLLVRHW (74 aa)) is a DNA-binding region (OB). Residues aspartate 1024 and glutamate 1031 each coordinate Mg(2+).

It in the N-terminal section; belongs to the LPG synthetase family. The protein in the C-terminal section; belongs to the class-II aminoacyl-tRNA synthetase family. The cofactor is Mg(2+).

It localises to the cell membrane. The enzyme catalyses tRNA(Lys) + L-lysine + ATP = L-lysyl-tRNA(Lys) + AMP + diphosphate. It carries out the reaction L-lysyl-tRNA(Lys) + a 1,2-diacyl-sn-glycero-3-phospho-(1'-sn-glycerol) = a 1,2-diacyl-sn-glycero-3-phospho-1'-(3'-O-L-lysyl)-sn-glycerol + tRNA(Lys). Its function is as follows. Catalyzes the production of L-lysyl-tRNA(Lys)transfer and the transfer of a lysyl group from L-lysyl-tRNA(Lys) to membrane-bound phosphatidylglycerol (PG), which produces lysylphosphatidylglycerol (LPG), one of the components of the bacterial membrane with a positive net charge. LPG synthesis contributes to the resistance to cationic antimicrobial peptides (CAMPs) and likely protects M.tuberculosis against the CAMPs produced by competiting microorganisms (bacteriocins). In fact, the modification of anionic phosphatidylglycerol with positively charged L-lysine results in repulsion of the peptides. The polypeptide is Lysylphosphatidylglycerol biosynthesis bifunctional protein LysX (lysX) (Mycobacterium sp. (strain KMS)).